Consider the following 336-residue polypeptide: DNA-directed RNA polymerase subunit alpha (336 aa).

An alpha N-terminal domain (alpha-NTD) region spans residues 1–232 (MIQKNWQELI…DQLGVFVNFD (232 aa)). The tract at residues 248 to 336 (FNPALLKKVD…DLAKRYEDQY (89 aa)) is alpha C-terminal domain (alpha-CTD).

This sequence belongs to the RNA polymerase alpha chain family. Homodimer. The RNAP catalytic core consists of 2 alpha, 1 beta, 1 beta' and 1 omega subunit. When a sigma factor is associated with the core the holoenzyme is formed, which can initiate transcription.

The catalysed reaction is RNA(n) + a ribonucleoside 5'-triphosphate = RNA(n+1) + diphosphate. DNA-dependent RNA polymerase catalyzes the transcription of DNA into RNA using the four ribonucleoside triphosphates as substrates. The polypeptide is DNA-directed RNA polymerase subunit alpha (Rhizobium etli (strain CIAT 652)).